Consider the following 121-residue polypeptide: Large ribosomal subunit protein bL12 (121 aa).

The protein belongs to the bacterial ribosomal protein bL12 family. As to quaternary structure, homodimer. Part of the ribosomal stalk of the 50S ribosomal subunit. Forms a multimeric L10(L12)X complex, where L10 forms an elongated spine to which 2 to 4 L12 dimers bind in a sequential fashion. Binds GTP-bound translation factors.

Its function is as follows. Forms part of the ribosomal stalk which helps the ribosome interact with GTP-bound translation factors. Is thus essential for accurate translation. The polypeptide is Large ribosomal subunit protein bL12 (Streptococcus agalactiae serotype V (strain ATCC BAA-611 / 2603 V/R)).